The following is a 149-amino-acid chain: Large ribosomal subunit protein uL13 (149 aa).

Belongs to the universal ribosomal protein uL13 family. In terms of assembly, part of the 50S ribosomal subunit.

In terms of biological role, this protein is one of the early assembly proteins of the 50S ribosomal subunit, although it is not seen to bind rRNA by itself. It is important during the early stages of 50S assembly. The chain is Large ribosomal subunit protein uL13 from Pelodictyon phaeoclathratiforme (strain DSM 5477 / BU-1).